The sequence spans 238 residues: ATP synthase subunit a (238 aa).

The next 5 membrane-spanning stretches (helical) occupy residues 16–36 (LIWL…TVLF), 79–99 (GLFM…FFPV), 103–123 (FVFG…SSLL), 129–149 (GLMS…MVVV), and 209–229 (VFGA…CVLL).

It belongs to the ATPase A chain family. In terms of assembly, F-type ATPases have 2 components, CF(1) - the catalytic core - and CF(0) - the membrane proton channel. CF(1) has five subunits: alpha(3), beta(3), gamma(1), delta(1), epsilon(1). CF(0) has three main subunits: a, b and c.

Its subcellular location is the mitochondrion inner membrane. Its function is as follows. Mitochondrial membrane ATP synthase (F(1)F(0) ATP synthase or Complex V) produces ATP from ADP in the presence of a proton gradient across the membrane which is generated by electron transport complexes of the respiratory chain. F-type ATPases consist of two structural domains, F(1) - containing the extramembraneous catalytic core and F(0) - containing the membrane proton channel, linked together by a central stalk and a peripheral stalk. During catalysis, ATP synthesis in the catalytic domain of F(1) is coupled via a rotary mechanism of the central stalk subunits to proton translocation. Key component of the proton channel; it may play a direct role in the translocation of protons across the membrane. The polypeptide is ATP synthase subunit a (ATP6) (Mytilus edulis (Blue mussel)).